Here is a 425-residue protein sequence, read N- to C-terminus: Protein disulfide isomerase-like 5-3 (425 aa).

Positions 1–28 (MGKPTLPPVVVVVVLLLLVVVLPATTCG) are cleaved as a signal peptide. One can recognise a Thioredoxin domain in the interval 29–153 (ADAGGGGEAE…LVENLKKLVA (125 aa)). Active-site nucleophile residues include Cys-75 and Cys-78. Cys-75 and Cys-78 are disulfide-bonded. Residues 386-406 (LLGVNAVYILVFLVAVLVLLM) form a helical membrane-spanning segment.

The protein belongs to the protein disulfide isomerase family.

It is found in the membrane. Its function is as follows. Acts as a protein-folding catalyst that interacts with nascent polypeptides to catalyze the formation, isomerization, and reduction or oxidation of disulfide bonds. May play a role in storage protein biogenesis. The chain is Protein disulfide isomerase-like 5-3 (PDIL5-3) from Oryza sativa subsp. japonica (Rice).